A 299-amino-acid polypeptide reads, in one-letter code: Ribosome-inactivating protein saporin-6 (299 aa).

The N-terminal stretch at 1-24 is a signal peptide; sequence MKIYVVATIAWILLQFSAWTTTDA. E200 is a catalytic residue. The propeptide occupies 278–299; sequence SSNEANSTVRHYGPLKPTLLIT. Residue N283 is glycosylated (N-linked (GlcNAc...) asparagine).

It belongs to the ribosome-inactivating protein family. Type 1 RIP subfamily. Seeds and leaves of the plant.

The catalysed reaction is Endohydrolysis of the N-glycosidic bond at one specific adenosine on the 28S rRNA.. Ribosome-inactivating protein of type 1, inhibits protein synthesis in animal cells. Useful as immunotoxin for pharmacological applications. This chain is Ribosome-inactivating protein saporin-6 (SAP6), found in Saponaria officinalis (Common soapwort).